Consider the following 98-residue polypeptide: MTTMFLNLLLAFTVALVGVFIYREHLMSTLLCLEGMMLSIFIMVALILLHHHLNSTMMLPLILLVFSACEAGVGLALLVKTSNSYGTDHINNLNLLQC.

The next 3 helical transmembrane spans lie at 1 to 21, 29 to 49, and 59 to 79; these read MTTM…GVFI, TLLC…LILL, and LPLI…ALLV.

Belongs to the complex I subunit 4L family. Core subunit of respiratory chain NADH dehydrogenase (Complex I) which is composed of 45 different subunits.

The protein localises to the mitochondrion inner membrane. The enzyme catalyses a ubiquinone + NADH + 5 H(+)(in) = a ubiquinol + NAD(+) + 4 H(+)(out). Its function is as follows. Core subunit of the mitochondrial membrane respiratory chain NADH dehydrogenase (Complex I) which catalyzes electron transfer from NADH through the respiratory chain, using ubiquinone as an electron acceptor. Part of the enzyme membrane arm which is embedded in the lipid bilayer and involved in proton translocation. The protein is NADH-ubiquinone oxidoreductase chain 4L (MT-ND4L) of Ornithorhynchus anatinus (Duckbill platypus).